A 251-amino-acid polypeptide reads, in one-letter code: Hydroxyacylglutathione hydrolase (251 aa).

The Zn(2+) site is built by His-53, His-55, Asp-57, His-58, His-110, Asp-127, and His-165.

This sequence belongs to the metallo-beta-lactamase superfamily. Glyoxalase II family. In terms of assembly, monomer. The cofactor is Zn(2+).

It carries out the reaction an S-(2-hydroxyacyl)glutathione + H2O = a 2-hydroxy carboxylate + glutathione + H(+). Its pathway is secondary metabolite metabolism; methylglyoxal degradation; (R)-lactate from methylglyoxal: step 2/2. Its function is as follows. Thiolesterase that catalyzes the hydrolysis of S-D-lactoyl-glutathione to form glutathione and D-lactic acid. The polypeptide is Hydroxyacylglutathione hydrolase (Salmonella dublin (strain CT_02021853)).